A 236-amino-acid polypeptide reads, in one-letter code: NADH-quinone oxidoreductase subunit C (236 aa).

The disordered stretch occupies residues 1–20 (MSPPNQDAQEGRPDSPTAEV).

Belongs to the complex I 30 kDa subunit family. As to quaternary structure, NDH-1 is composed of 14 different subunits. Subunits NuoB, C, D, E, F, and G constitute the peripheral sector of the complex.

It localises to the cell membrane. The catalysed reaction is a quinone + NADH + 5 H(+)(in) = a quinol + NAD(+) + 4 H(+)(out). NDH-1 shuttles electrons from NADH, via FMN and iron-sulfur (Fe-S) centers, to quinones in the respiratory chain. The immediate electron acceptor for the enzyme in this species is believed to be a menaquinone. Couples the redox reaction to proton translocation (for every two electrons transferred, four hydrogen ions are translocated across the cytoplasmic membrane), and thus conserves the redox energy in a proton gradient. The chain is NADH-quinone oxidoreductase subunit C from Mycobacterium tuberculosis (strain ATCC 25177 / H37Ra).